The primary structure comprises 493 residues: F(420)H(2) dehydrogenase subunit N (493 aa).

14 helical membrane passes run 7-27 (LAPE…GVFL), 34-54 (ILGY…VKSF), 78-98 (LSQF…IASI), 107-127 (TEEF…VASA), 130-150 (LILL…LAGF), 165-185 (FVIG…VYGA), 205-225 (PIGI…MALV), 244-264 (ALLA…VFII), 273-293 (WQFM…VVAV), 310-330 (AGYI…GGIM), 333-353 (LAHA…VWMI), 381-401 (ALCM…AGFM), 404-424 (FVLF…IAIL), and 454-474 (IPFP…VMGL).

The protein belongs to the complex I subunit 2 family. As to quaternary structure, the FPO complex is composed of at least 13 different subunits. FpoA, FpoH, FpoJ, FpoK, FpoL, FpoM and FpoN proteins constitute the membrane sector of the complex.

The protein localises to the cell membrane. It carries out the reaction methanophenazine + reduced coenzyme F420-(gamma-L-Glu)(n) = dihydromethanophenazine + oxidized coenzyme F420-(gamma-L-Glu)(n) + H(+). Its function is as follows. Component of the F(420)H(2) dehydrogenase (FPO complex) which is part of the energy-conserving F(420)H(2):heterodisulfide oxidoreductase system. The membrane-bound electron transfer system of the complex plays an important role in the metabolism of methylotrophic methanogens when the organisms grow on methanol or methylamines. Catalyzes the oxidation of methanophenazine to dihydromethanophenazine. It shuttles electrons from F(420)H(2), via FAD and iron-sulfur (Fe-S) centers, to methanophenazine (an electron carrier in the membrane). It couples the redox reaction to proton translocation (for every two electrons transferred, two hydrogen ions are translocated across the cytoplasmic membrane), and thus conserves the redox energy in a proton gradient. It also catalyzes the oxidation of F(420)H(2) with quinones such as 2,3-dimethyl-1,4-naphthoquinone, 2-methyl-1,4-naphthoquinone and tetramethyl-p-benzoquinone. This is F(420)H(2) dehydrogenase subunit N (fpoN) from Methanosarcina mazei (strain ATCC BAA-159 / DSM 3647 / Goe1 / Go1 / JCM 11833 / OCM 88) (Methanosarcina frisia).